Consider the following 281-residue polypeptide: Acetyl-coenzyme A carboxylase carboxyl transferase subunit beta (281 aa).

Residues 23-281 (LWSKCEDCGA…KTLAMMRVEG (259 aa)) enclose the CoA carboxyltransferase N-terminal domain. The Zn(2+) site is built by C27, C30, C46, and C49. The C4-type zinc-finger motif lies at 27-49 (CEDCGAMLHRRQLEENLNTCNEC).

It belongs to the AccD/PCCB family. Acetyl-CoA carboxylase is a heterohexamer composed of biotin carboxyl carrier protein (AccB), biotin carboxylase (AccC) and two subunits each of ACCase subunit alpha (AccA) and ACCase subunit beta (AccD). Zn(2+) serves as cofactor.

Its subcellular location is the cytoplasm. It carries out the reaction N(6)-carboxybiotinyl-L-lysyl-[protein] + acetyl-CoA = N(6)-biotinyl-L-lysyl-[protein] + malonyl-CoA. It functions in the pathway lipid metabolism; malonyl-CoA biosynthesis; malonyl-CoA from acetyl-CoA: step 1/1. Component of the acetyl coenzyme A carboxylase (ACC) complex. Biotin carboxylase (BC) catalyzes the carboxylation of biotin on its carrier protein (BCCP) and then the CO(2) group is transferred by the transcarboxylase to acetyl-CoA to form malonyl-CoA. In Chlorobium luteolum (strain DSM 273 / BCRC 81028 / 2530) (Pelodictyon luteolum), this protein is Acetyl-coenzyme A carboxylase carboxyl transferase subunit beta.